We begin with the raw amino-acid sequence, 203 residues long: MEGAELIIQEINREAEQKIQYILSEAQKEAEKIKEEARKRAEDRAQWILRKAKTQAEMEKQRAIASARLEVRKKRLEVQEEMIRAVLSALRERLASLPADEYFQTLVTLTTEALEELNIDSAVVRSNEETLKLIVEKLPEFKKSVSEKLGKEVEITVGEPISTIGGVLVESSDGSVRVDNTFEARIERLEADLRARIAKALFG.

This sequence belongs to the V-ATPase E subunit family. In terms of assembly, has multiple subunits with at least A(3), B(3), C, D, E, F, H, I and proteolipid K(x).

The protein resides in the cell membrane. Functionally, component of the A-type ATP synthase that produces ATP from ADP in the presence of a proton gradient across the membrane. The polypeptide is A-type ATP synthase subunit E (Thermococcus kodakarensis (strain ATCC BAA-918 / JCM 12380 / KOD1) (Pyrococcus kodakaraensis (strain KOD1))).